The sequence spans 837 residues: Endo-1,4-beta-xylanase Z (837 aa).

Positions 1-28 (MSRKLFSVLLVGLMLMTSLLVTISSTSA) are cleaved as a signal peptide. Residues 299–420 (TRIEAEDYDG…PVNIDWFTFG (122 aa)) form the CBM6 domain. Residues 424–492 (SSTGLGDLNG…ILRIITEFPG (69 aa)) enclose the Dockerin domain. The 322-residue stretch at 512–833 (TISGNALRDY…KPAYNAIKEA (322 aa)) folds into the GH10 domain. E645 acts as the Proton donor in catalysis. E754 functions as the Nucleophile in the catalytic mechanism. A disulfide bridge connects residues C783 and C789.

It belongs to the glycosyl hydrolase 10 (cellulase F) family.

The enzyme catalyses Endohydrolysis of (1-&gt;4)-beta-D-xylosidic linkages in xylans.. In Acetivibrio thermocellus (strain ATCC 27405 / DSM 1237 / JCM 9322 / NBRC 103400 / NCIMB 10682 / NRRL B-4536 / VPI 7372) (Clostridium thermocellum), this protein is Endo-1,4-beta-xylanase Z (xynZ).